Reading from the N-terminus, the 201-residue chain is Recombination protein RecR (201 aa).

Residues 60–75 (CKTCGNIDTQNPCTVC) form a C4-type zinc finger. The region spanning 83 to 178 (SIIVVVADVA…KVTRLAHGVP (96 aa)) is the Toprim domain.

Belongs to the RecR family.

In terms of biological role, may play a role in DNA repair. It seems to be involved in an RecBC-independent recombinational process of DNA repair. It may act with RecF and RecO. In Rhodopseudomonas palustris (strain HaA2), this protein is Recombination protein RecR.